The sequence spans 326 residues: Dehydrogenase/reductase SDR family protein 7-like (326 aa).

Residues Met1–Val17 lie on the Cytoplasmic side of the membrane. Residues Leu18–Ile38 form a helical; Signal-anchor for type II membrane protein membrane-spanning segment. Topologically, residues Trp39–Thr326 are peroxisomal. Leu57 to Ile81 is a binding site for NAD(+). Residue Ser193 coordinates substrate. The active-site Proton acceptor is Tyr206.

It belongs to the short-chain dehydrogenases/reductases (SDR) family.

Its subcellular location is the peroxisome membrane. In terms of biological role, putative oxidoreductase. The polypeptide is Dehydrogenase/reductase SDR family protein 7-like (Drosophila melanogaster (Fruit fly)).